The sequence spans 351 residues: Dual-specificity RNA methyltransferase RlmN (351 aa).

E90 functions as the Proton acceptor in the catalytic mechanism. A Radical SAM core domain is found at 96–330 (EKDHYTACLS…ATLRKSKGSD (235 aa)). C103 and C335 are oxidised to a cystine. [4Fe-4S] cluster-binding residues include C110, C114, and C117. S-adenosyl-L-methionine-binding positions include 162-163 (GE), S194, 216-218 (SLH), and N292. Residue C335 is the S-methylcysteine intermediate of the active site.

The protein belongs to the radical SAM superfamily. RlmN family. Requires [4Fe-4S] cluster as cofactor.

The protein resides in the cytoplasm. The catalysed reaction is adenosine(2503) in 23S rRNA + 2 reduced [2Fe-2S]-[ferredoxin] + 2 S-adenosyl-L-methionine = 2-methyladenosine(2503) in 23S rRNA + 5'-deoxyadenosine + L-methionine + 2 oxidized [2Fe-2S]-[ferredoxin] + S-adenosyl-L-homocysteine. It carries out the reaction adenosine(37) in tRNA + 2 reduced [2Fe-2S]-[ferredoxin] + 2 S-adenosyl-L-methionine = 2-methyladenosine(37) in tRNA + 5'-deoxyadenosine + L-methionine + 2 oxidized [2Fe-2S]-[ferredoxin] + S-adenosyl-L-homocysteine. Its function is as follows. Specifically methylates position 2 of adenine 2503 in 23S rRNA and position 2 of adenine 37 in tRNAs. m2A2503 modification seems to play a crucial role in the proofreading step occurring at the peptidyl transferase center and thus would serve to optimize ribosomal fidelity. In Solidesulfovibrio magneticus (strain ATCC 700980 / DSM 13731 / RS-1) (Desulfovibrio magneticus), this protein is Dual-specificity RNA methyltransferase RlmN.